The sequence spans 343 residues: Uroporphyrinogen decarboxylase (343 aa).

Substrate-binding positions include 24–28 (RQAGR), Phe43, Asp74, Tyr151, Ser206, and His321.

This sequence belongs to the uroporphyrinogen decarboxylase family. Homodimer.

The protein localises to the cytoplasm. The catalysed reaction is uroporphyrinogen III + 4 H(+) = coproporphyrinogen III + 4 CO2. It participates in porphyrin-containing compound metabolism; protoporphyrin-IX biosynthesis; coproporphyrinogen-III from 5-aminolevulinate: step 4/4. Functionally, catalyzes the decarboxylation of four acetate groups of uroporphyrinogen-III to yield coproporphyrinogen-III. This Thermosynechococcus vestitus (strain NIES-2133 / IAM M-273 / BP-1) protein is Uroporphyrinogen decarboxylase.